The sequence spans 474 residues: Glutamate--tRNA ligase (474 aa).

A 'HIGH' region motif is present at residues 9–19; sequence PSPTGYLHVGG. The 'KMSKS' region signature appears at 240–244; that stretch reads KLSKR. An ATP-binding site is contributed by lysine 243.

The protein belongs to the class-I aminoacyl-tRNA synthetase family. Glutamate--tRNA ligase type 1 subfamily. Monomer.

Its subcellular location is the cytoplasm. The catalysed reaction is tRNA(Glu) + L-glutamate + ATP = L-glutamyl-tRNA(Glu) + AMP + diphosphate. Catalyzes the attachment of glutamate to tRNA(Glu) in a two-step reaction: glutamate is first activated by ATP to form Glu-AMP and then transferred to the acceptor end of tRNA(Glu). The sequence is that of Glutamate--tRNA ligase from Aliivibrio fischeri (strain MJ11) (Vibrio fischeri).